Reading from the N-terminus, the 129-residue chain is Glycine cleavage system H protein (129 aa).

The region spanning 24 to 106 is the Lipoyl-binding domain; that stretch reads TYTVGITEHA…YAGGWIFKIK (83 aa). An N6-lipoyllysine modification is found at Lys-65.

It belongs to the GcvH family. The glycine cleavage system is composed of four proteins: P, T, L and H. It depends on (R)-lipoate as a cofactor.

Its function is as follows. The glycine cleavage system catalyzes the degradation of glycine. The H protein shuttles the methylamine group of glycine from the P protein to the T protein. This is Glycine cleavage system H protein from Escherichia fergusonii (strain ATCC 35469 / DSM 13698 / CCUG 18766 / IAM 14443 / JCM 21226 / LMG 7866 / NBRC 102419 / NCTC 12128 / CDC 0568-73).